We begin with the raw amino-acid sequence, 933 residues long: Bromodomain testis-specific protein (933 aa).

Positions Met1–Ile21 are disordered. Residues Arg28–Met134 form the Bromo 1 domain. The short motif at Lys214–Pro225 is the Nuclear localization signal element. Residues Glu235–Val263 are disordered. A Bromo 2 domain is found at Asn278–Ile385. Disordered stretches follow at residues Arg398–Ala425, Lys576–Ser610, and Gly627–Thr662. Low complexity predominate over residues Glu404–Ser418. A coiled-coil region spans residues Glu423–Thr448. The 83-residue stretch at Val495–Pro577 folds into the NET domain. The segment covering Lys584–Asp603 has biased composition (basic and acidic residues). Positions Ser630–Ser660 are enriched in low complexity. Positions Ala829–Asp917 form a coiled coil.

It belongs to the BET family.

The protein localises to the nucleus. In terms of biological role, testis-specific chromatin protein that specifically binds histone H4 acetylated at 'Lys-5' and 'Lys-8' (H4K5ac and H4K8ac, respectively) and plays a key role in spermatogenesis. Required in late pachytene spermatocytes: plays a role in meiotic and post-meiotic cells by binding to acetylated histones at the promoter of specific meiotic and post-meiotic genes, facilitating their activation at the appropriate time. In the post-meiotic phase of spermatogenesis, binds to hyperacetylated histones and participates in their general removal from DNA. Also recognizes and binds a subset of butyrylated histones: able to bind histone H4 butyrylated at 'Lys-8' (H4K8ac), while it is not able to bind H4 butyrylated at 'Lys-5' (H4K5ac). The protein is Bromodomain testis-specific protein (brdt) of Xenopus tropicalis (Western clawed frog).